Consider the following 282-residue polypeptide: DegV domain-containing protein M6_Spy0690 (282 aa).

The DegV domain occupies 3-280 (LAVITDSTAT…EGAIAFGVTP (278 aa)). Residues Thr61 and Ser94 each contribute to the hexadecanoate site.

In terms of biological role, may bind long-chain fatty acids, such as palmitate, and may play a role in lipid transport or fatty acid metabolism. In Streptococcus pyogenes serotype M6 (strain ATCC BAA-946 / MGAS10394), this protein is DegV domain-containing protein M6_Spy0690.